Reading from the N-terminus, the 216-residue chain is DNA replication complex GINS protein PSF3 (216 aa).

Residues 1-16 form a not essential for folding and stability of GINS complex, but may regulate accessibility to the central complex pore region; sequence MSEAYFPVESGALGPE.

It belongs to the GINS3/PSF3 family. As to quaternary structure, component of the GINS complex which is a heterotetramer of GINS1, GINS2, GINS3 and GINS4. Forms a stable subcomplex with GINS2. GINS complex interacts with DNA primase in vitro. Component of the CMG helicase complex, a hexameric ring of related MCM2-7 subunits stabilized by CDC45 and the tetrameric GINS complex.

Its subcellular location is the nucleus. The protein localises to the chromosome. In terms of biological role, required for correct functioning of the GINS complex, a complex that plays an essential role in the initiation of DNA replication, and progression of DNA replication forks. GINS complex is a core component of CDC45-MCM-GINS (CMG) helicase, the molecular machine that unwinds template DNA during replication, and around which the replisome is built. This is DNA replication complex GINS protein PSF3 (Gins3) from Mus musculus (Mouse).